The primary structure comprises 126 residues: Small ribosomal subunit protein uS13 (126 aa).

The segment at 92–126 (HRRGLPANGQRTHTNARTRKGPRKGMLQRRPAATK) is disordered. The span at 105–118 (TNARTRKGPRKGML) shows a compositional bias: basic residues.

The protein belongs to the universal ribosomal protein uS13 family. As to quaternary structure, part of the 30S ribosomal subunit. Forms a loose heterodimer with protein S19. Forms two bridges to the 50S subunit in the 70S ribosome.

Located at the top of the head of the 30S subunit, it contacts several helices of the 16S rRNA. In the 70S ribosome it contacts the 23S rRNA (bridge B1a) and protein L5 of the 50S subunit (bridge B1b), connecting the 2 subunits; these bridges are implicated in subunit movement. Contacts the tRNAs in the A and P-sites. This Sorangium cellulosum (strain So ce56) (Polyangium cellulosum (strain So ce56)) protein is Small ribosomal subunit protein uS13.